Consider the following 398-residue polypeptide: tRNA-specific 2-thiouridylase MnmA (398 aa).

Residues alanine 20–serine 27 and leucine 46 contribute to the ATP site. Residue cysteine 114 is the Nucleophile of the active site. The cysteines at positions 114 and 210 are disulfide-linked. Residue glycine 138 participates in ATP binding. Residues arginine 160–glutamine 162 form an interaction with tRNA region. Cysteine 210 acts as the Cysteine persulfide intermediate in catalysis.

The protein belongs to the MnmA/TRMU family.

Its subcellular location is the cytoplasm. It carries out the reaction S-sulfanyl-L-cysteinyl-[protein] + uridine(34) in tRNA + AH2 + ATP = 2-thiouridine(34) in tRNA + L-cysteinyl-[protein] + A + AMP + diphosphate + H(+). Its function is as follows. Catalyzes the 2-thiolation of uridine at the wobble position (U34) of tRNA, leading to the formation of s(2)U34. In Brucella melitensis biotype 1 (strain ATCC 23456 / CCUG 17765 / NCTC 10094 / 16M), this protein is tRNA-specific 2-thiouridylase MnmA.